A 292-amino-acid chain; its full sequence is Glutathione S-transferase L2, chloroplastic (292 aa).

Residues 1-56 constitute a chloroplast transit peptide; that stretch reads MSVGLKVSAFLHPTLALSSRDVSLSSSSSSLYLDRKILRPGSGRRWCKSRRTEPIL. The GST N-terminal domain maps to 79–160; that stretch reads GSTRLYISYT…YIDTNFEGPS (82 aa). Glutathione contacts are provided by residues 89-90, 117-118, 131-132, and 144-145; these read CP, NR, KV, and ES. Residues 130–286 form the GST C-terminal domain; that stretch reads NKVPALEHNN…ELVERYKRRV (157 aa).

It belongs to the GST superfamily. Lambda family.

Its subcellular location is the plastid. It is found in the chloroplast. The catalysed reaction is RX + glutathione = an S-substituted glutathione + a halide anion + H(+). Its function is as follows. Catalyzes the glutathione-dependent reduction of S-glutathionylquercetin to quercetin. In vitro, possesses glutathione-dependent thiol transferase activity toward 2-hydroxyethyl disulfide (HED). The polypeptide is Glutathione S-transferase L2, chloroplastic (GSTL2) (Arabidopsis thaliana (Mouse-ear cress)).